A 559-amino-acid chain; its full sequence is MMLPRCFVTVLLMSSVLYIGGETSSEVLGPVVSTEAGSFQGMELTTHGERVIYAFLGIPYAKPPTGLLRFKKPQPADFIQGTYKATEKPPSCFQLDSDLQLPWADPDSPMKEDCLFLNLWTPASLSTEEEELKSVMVWIHGGGYTSGSSALDVYDGQTLSSSGDVVVVTMNYRLDAFGFLNSLTEDAPGNMALYDQLLALQWVHTNIKYFGGDPNKVTLFGESVGAFATSFLALSPLTKGLFQKIMLESGSAYNKLTVNSIDQAKNNNQLATLVGCANETFTLISNPEEVVACMREVAPAKFTQTYYKELGSEREKINFIFWPHFGDDILPTRTAELIKEKNLTALFAGVNSVEGSALSVFFFPEVYQMFVESNLTLTKAYATILMNEFFKVFNFQDSAKAIEFYLGDVEDDDEEGIRSALFGVVGDYIITCPTIYLADKYSERGANVQFYRFDRRPSTSQWPPEWMGAAHNDEIQFVFGMPVRYPEKYTEEERTLSEYMTRTWTNFVKSEDLKLKNGSQWPSYSLSEPQFATLQTNEQIIGSGQRKAECDFWRPYFDI.

A signal peptide spans 1–21 (MMLPRCFVTVLLMSSVLYIGG). Cys-92 and Cys-114 are joined by a disulfide. 142–143 (GG) lines the substrate pocket. Ser-223 serves as the catalytic Acyl-ester intermediate. Ser-223 bears the Phosphoserine mark. An intrachain disulfide couples Cys-276 to Cys-293. 2 N-linked (GlcNAc...) asparagine glycosylation sites follow: Asn-278 and Asn-342. Glu-354 acts as the Charge relay system in catalysis. N-linked (GlcNAc...) asparagine glycosylation occurs at Asn-374. Cys-432 and Cys-550 form a disulfide bridge. The Charge relay system role is filled by His-471.

Belongs to the type-B carboxylesterase/lipase family. In terms of tissue distribution, expressed by the venom gland.

It is found in the secreted. The catalysed reaction is acetylcholine + H2O = choline + acetate + H(+). Its function is as follows. Terminates signal transduction at the neuromuscular junction by rapid hydrolysis of the acetylcholine released into the synaptic cleft. In Trittame loki (Brush-footed trapdoor spider), this protein is Acetylcholinesterase-1.